Consider the following 706-residue polypeptide: Methionine--tRNA ligase (706 aa).

Residues 13 to 23 (PYANGSIHLGH) carry the 'HIGH' region motif. Zn(2+) contacts are provided by Cys-144, Cys-147, Cys-157, and Cys-160. The short motif at 336–340 (KMSKS) is the 'KMSKS' region element. Lys-339 lines the ATP pocket. Positions 570-593 (QQTMNTETESHSPQRHGQAQQHPV) are disordered. The 103-residue stretch at 604-706 (DFVKIDLRIA…SGAQPGMRVK (103 aa)) folds into the tRNA-binding domain.

The protein belongs to the class-I aminoacyl-tRNA synthetase family. MetG type 1 subfamily. Homodimer. Requires Zn(2+) as cofactor.

Its subcellular location is the cytoplasm. It catalyses the reaction tRNA(Met) + L-methionine + ATP = L-methionyl-tRNA(Met) + AMP + diphosphate. In terms of biological role, is required not only for elongation of protein synthesis but also for the initiation of all mRNA translation through initiator tRNA(fMet) aminoacylation. The chain is Methionine--tRNA ligase from Nitrosomonas europaea (strain ATCC 19718 / CIP 103999 / KCTC 2705 / NBRC 14298).